The chain runs to 200 residues: Small ribosomal subunit protein uS4 (200 aa).

A disordered region spans residues 22–43 (TGKELERRPYAPGQHGPTQRKK). The S4 RNA-binding domain occupies 92 to 170 (QRLDNIVYRL…VPEYVTFDAE (79 aa)).

The protein belongs to the universal ribosomal protein uS4 family. In terms of assembly, part of the 30S ribosomal subunit. Contacts protein S5. The interaction surface between S4 and S5 is involved in control of translational fidelity.

Functionally, one of the primary rRNA binding proteins, it binds directly to 16S rRNA where it nucleates assembly of the body of the 30S subunit. Its function is as follows. With S5 and S12 plays an important role in translational accuracy. This is Small ribosomal subunit protein uS4 from Listeria innocua serovar 6a (strain ATCC BAA-680 / CLIP 11262).